A 607-amino-acid chain; its full sequence is tRNA uridine 5-carboxymethylaminomethyl modification enzyme MnmG (607 aa).

FAD is bound by residues 11-16 (GGGHAG), Val-123, and Ser-178. 270 to 284 (GPRYCPSVEDKIVRF) lines the NAD(+) pocket. Gln-367 is an FAD binding site.

Belongs to the MnmG family. Homodimer. Heterotetramer of two MnmE and two MnmG subunits. Requires FAD as cofactor.

The protein resides in the cytoplasm. Its function is as follows. NAD-binding protein involved in the addition of a carboxymethylaminomethyl (cmnm) group at the wobble position (U34) of certain tRNAs, forming tRNA-cmnm(5)s(2)U34. The sequence is that of tRNA uridine 5-carboxymethylaminomethyl modification enzyme MnmG from Metamycoplasma arthritidis (strain 158L3-1) (Mycoplasma arthritidis).